Consider the following 399-residue polypeptide: CCA-adding enzyme (399 aa).

The ATP site is built by Gly-33 and Arg-36. 2 residues coordinate CTP: Gly-33 and Arg-36. 2 residues coordinate Mg(2+): Asp-46 and Asp-48. Residues Arg-117, Asp-160, Arg-163, Arg-166, and Arg-169 each contribute to the ATP site. Positions 117, 160, 163, 166, and 169 each coordinate CTP.

The protein belongs to the tRNA nucleotidyltransferase/poly(A) polymerase family. Bacterial CCA-adding enzyme type 3 subfamily. As to quaternary structure, homodimer. Mg(2+) is required as a cofactor.

It catalyses the reaction a tRNA precursor + 2 CTP + ATP = a tRNA with a 3' CCA end + 3 diphosphate. It carries out the reaction a tRNA with a 3' CCA end + 2 CTP + ATP = a tRNA with a 3' CCACCA end + 3 diphosphate. Functionally, catalyzes the addition and repair of the essential 3'-terminal CCA sequence in tRNAs without using a nucleic acid template. Adds these three nucleotides in the order of C, C, and A to the tRNA nucleotide-73, using CTP and ATP as substrates and producing inorganic pyrophosphate. tRNA 3'-terminal CCA addition is required both for tRNA processing and repair. Also involved in tRNA surveillance by mediating tandem CCA addition to generate a CCACCA at the 3' terminus of unstable tRNAs. While stable tRNAs receive only 3'-terminal CCA, unstable tRNAs are marked with CCACCA and rapidly degraded. The chain is CCA-adding enzyme from Lactobacillus helveticus (strain DPC 4571).